The chain runs to 119 residues: Large ribosomal subunit protein bL20 (119 aa).

It belongs to the bacterial ribosomal protein bL20 family.

In terms of biological role, binds directly to 23S ribosomal RNA and is necessary for the in vitro assembly process of the 50S ribosomal subunit. It is not involved in the protein synthesizing functions of that subunit. The polypeptide is Large ribosomal subunit protein bL20 (Burkholderia cenocepacia (strain HI2424)).